The primary structure comprises 554 residues: Dihydroxy-acid dehydratase (554 aa).

Asp78 contributes to the Mg(2+) binding site. Cys119 contacts [2Fe-2S] cluster. 2 residues coordinate Mg(2+): Asp120 and Lys121. Residue Lys121 is modified to N6-carboxylysine. Cys191 is a binding site for [2Fe-2S] cluster. Glu444 contributes to the Mg(2+) binding site. The Proton acceptor role is filled by Ser470.

Belongs to the IlvD/Edd family. Homodimer. [2Fe-2S] cluster serves as cofactor. It depends on Mg(2+) as a cofactor.

It carries out the reaction (2R)-2,3-dihydroxy-3-methylbutanoate = 3-methyl-2-oxobutanoate + H2O. It catalyses the reaction (2R,3R)-2,3-dihydroxy-3-methylpentanoate = (S)-3-methyl-2-oxopentanoate + H2O. It functions in the pathway amino-acid biosynthesis; L-isoleucine biosynthesis; L-isoleucine from 2-oxobutanoate: step 3/4. Its pathway is amino-acid biosynthesis; L-valine biosynthesis; L-valine from pyruvate: step 3/4. In terms of biological role, functions in the biosynthesis of branched-chain amino acids. Catalyzes the dehydration of (2R,3R)-2,3-dihydroxy-3-methylpentanoate (2,3-dihydroxy-3-methylvalerate) into 2-oxo-3-methylpentanoate (2-oxo-3-methylvalerate) and of (2R)-2,3-dihydroxy-3-methylbutanoate (2,3-dihydroxyisovalerate) into 2-oxo-3-methylbutanoate (2-oxoisovalerate), the penultimate precursor to L-isoleucine and L-valine, respectively. The chain is Dihydroxy-acid dehydratase from Nitratidesulfovibrio vulgaris (strain DP4) (Desulfovibrio vulgaris).